Reading from the N-terminus, the 168-residue chain is Peptide deformylase 1 (168 aa).

Fe cation contacts are provided by Cys-91 and His-133. Glu-134 is a catalytic residue. Fe cation is bound at residue His-137.

Belongs to the polypeptide deformylase family. The cofactor is Fe(2+).

The enzyme catalyses N-terminal N-formyl-L-methionyl-[peptide] + H2O = N-terminal L-methionyl-[peptide] + formate. Its function is as follows. Removes the formyl group from the N-terminal Met of newly synthesized proteins. Requires at least a dipeptide for an efficient rate of reaction. N-terminal L-methionine is a prerequisite for activity but the enzyme has broad specificity at other positions. The protein is Peptide deformylase 1 of Shewanella oneidensis (strain ATCC 700550 / JCM 31522 / CIP 106686 / LMG 19005 / NCIMB 14063 / MR-1).